The primary structure comprises 547 residues: Chaperonin GroEL (547 aa).

ATP contacts are provided by residues 30-33 (TLGP), Lys-51, 87-91 (DGTTT), Gly-415, 479-481 (NAA), and Asp-495.

The protein belongs to the chaperonin (HSP60) family. Forms a cylinder of 14 subunits composed of two heptameric rings stacked back-to-back. Interacts with the co-chaperonin GroES.

Its subcellular location is the cytoplasm. It catalyses the reaction ATP + H2O + a folded polypeptide = ADP + phosphate + an unfolded polypeptide.. Its function is as follows. Together with its co-chaperonin GroES, plays an essential role in assisting protein folding. The GroEL-GroES system forms a nano-cage that allows encapsulation of the non-native substrate proteins and provides a physical environment optimized to promote and accelerate protein folding. The polypeptide is Chaperonin GroEL (Pseudomonas paraeruginosa (strain DSM 24068 / PA7) (Pseudomonas aeruginosa (strain PA7))).